The primary structure comprises 206 residues: Protein GET1 (206 aa).

The Lumenal portion of the chain corresponds to 1 to 4 (MPSL). Residues 5-24 (LITVLFLNVIIYVVNTVGAA) traverse the membrane as a helical segment. At 25-110 (TVDGLLWLLY…TFDMTIKIAR (86 aa)) the chain is on the cytoplasmic side. Residues 75–100 (AKLRRRHDKALEAYEAKNNELTQSKS) are a coiled coil. The helical transmembrane segment at 111–131 (WAATSGLMLFLQFWYSKTPIF) threads the bilayer. The Lumenal portion of the chain corresponds to 132–155 (TLPPGWIPWQVQWVLSFPRAPMGT). The helical transmembrane segment at 156–172 (VSIQIWGGACATVVALV) threads the bilayer. Residues 173 to 206 (GDAMKASLAYVSKPKIDRIKLGATMEGKEGKKRQ) lie on the Cytoplasmic side of the membrane.

This sequence belongs to the WRB/GET1 family. Interacts with GET3.

The protein localises to the endoplasmic reticulum membrane. In terms of biological role, required for the post-translational delivery of tail-anchored (TA) proteins to the endoplasmic reticulum. Acts as a membrane receptor for soluble GET3, which recognizes and selectively binds the transmembrane domain of TA proteins in the cytosol. This chain is Protein GET1, found in Ajellomyces capsulatus (strain G186AR / H82 / ATCC MYA-2454 / RMSCC 2432) (Darling's disease fungus).